Here is a 265-residue protein sequence, read N- to C-terminus: Chlorophyll a-b binding protein 1C, chloroplastic (265 aa).

A chloroplast-targeting transit peptide spans 1-34; that stretch reads MAAATMALSSPSFAGQAVKLSPSASEISGNGRIT. Residues 151-171 form a helical membrane-spanning segment; the sequence is LVHAQSILAIWACQVVLMGAV. 6 residues coordinate chlorophyll b: Val-152, Ser-156, Gln-164, Glu-172, Arg-175, and Leu-181. Chlorophyll a-binding residues include Lys-212, Glu-213, Asn-216, Arg-218, Gln-230, His-245, and Ala-254. The helical transmembrane segment at 219 to 239 threads the bilayer; the sequence is LAMFSMFGFFVQAIVTGKGPL. Phe-261 contributes to the chlorophyll b binding site.

The protein belongs to the light-harvesting chlorophyll a/b-binding (LHC) protein family. The LHC complex consists of chlorophyll a-b binding proteins. It depends on Binds at least 14 chlorophylls (8 Chl-a and 6 Chl-b) and carotenoids such as lutein and neoxanthin. as a cofactor. In terms of processing, photoregulated by reversible phosphorylation of its threonine residues.

It is found in the plastid. It localises to the chloroplast thylakoid membrane. Its function is as follows. The light-harvesting complex (LHC) functions as a light receptor, it captures and delivers excitation energy to photosystems with which it is closely associated. The polypeptide is Chlorophyll a-b binding protein 1C, chloroplastic (CAB1C) (Solanum lycopersicum (Tomato)).